A 460-amino-acid chain; its full sequence is Keratin, type I cytoskeletal 27 (460 aa).

The tract at residues 1–83 is head; it reads MSVRFSSASR…GNEHGLLSGN (83 aa). A coil 1A region spans residues 84-119; that stretch reads EKVTMQNLNDRLASYLDNVRALEEANADLEQKIKGW. The 316-residue stretch at 84–399 folds into the IF rod domain; the sequence is EKVTMQNLND…RLIDGEDGSC (316 aa). Residues 120–141 are linker 1; the sequence is YEKFGPGSCRGLDHDYSRYFTV. The coil 1B stretch occupies residues 142–233; sequence IDDLRNQIIS…KNHEEEMKAL (92 aa). Residues 234-256 are linker 12; the sequence is QCAAGGNVNVEMNAAPGVDLTVL. A coil 2 region spans residues 257–395; sequence LNNMRAEYEA…ETYCRLIDGE (139 aa). The interval 396–460 is tail; sequence DGSCTKSKGY…NMKSEQRVPS (65 aa). Residues 429–460 are disordered; the sequence is DPRGKVPSSRVHTVEEKSTKVNNMKSEQRVPS. Residues 448–460 are compositionally biased toward polar residues; it reads KVNNMKSEQRVPS.

It belongs to the intermediate filament family. Heterotetramer of two type I and two type II keratins. Interacts with KRT6A to form filaments.

It is found in the cytoplasm. Its function is as follows. Essential for the proper assembly of type I and type II keratin protein complexes and formation of keratin intermediate filaments in the inner root sheath (irs). The protein is Keratin, type I cytoskeletal 27 of Capra hircus (Goat).